We begin with the raw amino-acid sequence, 564 residues long: Septin-9 (564 aa).

Position 1 is an N-acetylmethionine (Met1). Phosphoserine is present on Ser12. Residues Thr24 and Thr31 each carry the phosphothreonine modification. Disordered regions lie at residues 38-165 and 178-224; these read VASS…PVTD and PAEA…DSEV. Lys44 is subject to N6-acetyllysine. Ser64, Ser67, and Ser71 each carry phosphoserine. A compositionally biased stretch (polar residues) spans 95-109; sequence DISSKQVESTASTPG. Over residues 116–134 the composition is skewed to basic and acidic residues; sequence KRAEVLGHKTPEPVPRRTE. Thr125 bears the Phosphothreonine mark. Residues 190–203 show a composition bias toward polar residues; that stretch reads TLENSEAPMSQLQS. Tyr258 is subject to Phosphotyrosine. Residues 275 to 546 form the Septin-type G domain; it reads QGFEFNIMVV…EAYRVKRLNE (272 aa). Residues 285 to 292 form a G1 motif region; that stretch reads GQSGLGKS. 285–292 contacts GTP; it reads GQSGLGKS. Phosphoserine occurs at positions 307 and 312. GTP is bound by residues Thr319, Gly345, 425–433, Gly480, and Arg495; that span reads KADTLTLEE. The segment at 342–345 is G3 motif; sequence DTPG. The G4 motif stretch occupies residues 424-427; that stretch reads AKAD.

The protein belongs to the TRAFAC class TrmE-Era-EngA-EngB-Septin-like GTPase superfamily. Septin GTPase family. Septins polymerize into heterooligomeric protein complexes that form filaments, and associate with cellular membranes, actin filaments, and microtubules. GTPase activity is required for filament formation. Interacts with SEPTIN2, SEPTIN6, SEPTIN7, SEPTIN11 and SEPTIN14. Interacts with RTKN and ARHGEF18. Expressed in the brain, mainly in the perikarya and processes of astrocytes in the cerebellum, dentate gyrus and corpus callosum (at protein level). In the sciatic nerve, highly expressed in Schwann cells (at protein level). Isoforms are differentially expressed in testes, kidney, liver, heart, spleen and brain. Undetectable in skeletal muscle.

Its subcellular location is the cytoplasm. The protein localises to the cytoskeleton. Filament-forming cytoskeletal GTPase. May play a role in cytokinesis (Potential). The chain is Septin-9 from Rattus norvegicus (Rat).